Reading from the N-terminus, the 277-residue chain is UPF0496 protein At3g48650 (277 aa).

The next 2 membrane-spanning stretches (helical) occupy residues Y124–V144 and S145–W165.

It belongs to the UPF0496 family.

It localises to the membrane. The sequence is that of UPF0496 protein At3g48650 from Arabidopsis thaliana (Mouse-ear cress).